The primary structure comprises 137 residues: DNA-directed RNA polymerase subunit omega (137 aa).

Residues 78–137 (DEPEPEAVPLLSSSPAAAAVAPQAASGDDNDIQFDRMSEEDLLRGLENLAPPTETEDEGD) are disordered. Residues 84–103 (AVPLLSSSPAAAAVAPQAAS) are compositionally biased toward low complexity. Positions 110-121 (QFDRMSEEDLLR) are enriched in basic and acidic residues.

It belongs to the RNA polymerase subunit omega family. The RNAP catalytic core consists of 2 alpha, 1 beta, 1 beta' and 1 omega subunit. When a sigma factor is associated with the core the holoenzyme is formed, which can initiate transcription.

The enzyme catalyses RNA(n) + a ribonucleoside 5'-triphosphate = RNA(n+1) + diphosphate. Its function is as follows. Promotes RNA polymerase assembly. Latches the N- and C-terminal regions of the beta' subunit thereby facilitating its interaction with the beta and alpha subunits. This Methylobacterium sp. (strain 4-46) protein is DNA-directed RNA polymerase subunit omega.